The chain runs to 398 residues: Aurofusarin biosynthesis regulatory protein aurR1 (398 aa).

A DNA-binding region (zn(2)-C6 fungal-type) is located at residues 18 to 45 (CDNCAKSKVRCGKEQPWCQRCERRGQVC). Disordered stretches follow at residues 52–73 (RSRKRTLDAAHPESDQRNGTPP) and 275–314 (AATIDDHTSPTPSNDGKDTERSVSRDTNVSQDGSEPSSLI). 2 stretches are compositionally biased toward basic and acidic residues: residues 56 to 67 (RTLDAAHPESDQ) and 289 to 298 (DGKDTERSVS). Positions 299–311 (RDTNVSQDGSEPS) are enriched in polar residues.

It is found in the nucleus. Its function is as follows. Transcription factor that specifically regulates the expression of the gene cluster that mediates the biosynthesis of aurofusarin, a red mycelium pigment which is acting as a mycotoxin. The chain is Aurofusarin biosynthesis regulatory protein aurR1 from Gibberella zeae (strain ATCC MYA-4620 / CBS 123657 / FGSC 9075 / NRRL 31084 / PH-1) (Wheat head blight fungus).